The sequence spans 688 residues: MYYRARHSLPYQKRMENLTWRMMYINNKSIFTNTNNAPKEIFEQSLDPEIDDFDYVAHIKKIGQFNQQKTQQQQDHLQSNLDNHNSIFADNTGFSNNNDRGSSGGGMTSISSLSKKRPAPFSPMIQPEKTTIIPTATNTMSQLSQQLNEFNKFNHPSQTSNFNDVNHHMEISTSHIAPTSSAFEFSLDPLAFEGPNQNFQPEPHHDFNTNSFDSMTSSYERPLFDDFLPRDHHNIQSSSVPTSASSFSTIVPKNTQFSTSASITSPTSTFSNQGNNSSNFHRLNSTVSITATPGNLLRQESMVSLPDYANHLRSMSQTPTMNSSNAPFSHSFNDGGSYFMNNFTGITLPSQPSPQPIHFDNKPKDDHFNTSLSVSQQQPSAKKSKRKSTITKSKKKAASPETTITSTGSTITTKSTNSNSTGKGTATGPAASNTGVSCTNCGTKTTPLWRRNPQGQPLCNACGLFLKLHGVVRPLSLKTDVIKKRQRGNNNGSGNSSGTTNNSNNYNNKSISKKNEIDDGDDLNPTSITNNTGLTNNNNSKSPAKSKKKSNFDNNSNSALNNLDKSKLKINTNEITNISETTSNSSSPVINLNHGGRSSGVFGNTPDYLNGITSPAVSLVKSEIDNPHQLNNSNSNGMLMTMHQSSHQSSLSTTFDHEVESNNEGSNSSGVNTSTANNQDWDWLNMNY.

Disordered regions lie at residues 83–125 (NHNS…SPMI), 259–278 (TSAS…NNSS), 343–438 (FTGI…GVSC), 482–565 (IKKR…NLDK), and 639–678 (LMTM…TANN). The segment covering 259–271 (TSASITSPTSTFS) has biased composition (low complexity). A compositionally biased stretch (basic and acidic residues) spans 359 to 368 (FDNKPKDDHF). Over residues 369–379 (NTSLSVSQQQP) the composition is skewed to polar residues. The span at 382 to 397 (KKSKRKSTITKSKKKA) shows a compositional bias: basic residues. Residues 402–428 (TTITSTGSTITTKSTNSNSTGKGTATG) show a composition bias toward low complexity. A GATA-type zinc finger spans residues 438–462 (CTNCGTKTTPLWRRNPQGQPLCNAC). 5 stretches are compositionally biased toward low complexity: residues 488–510 (GNNN…NNKS), 529–543 (TNNT…SKSP), 552–565 (FDNN…NLDK), 639–654 (LMTM…LSTT), and 662–678 (NNEG…TANN).

It is found in the nucleus. Its function is as follows. Transcriptional regulator of nitrogen utilization required for nitrogen catabolite repression and utilization of isoleucine, tyrosine and tryptophan as nitrogen sources. Controls expression of the MEP2 ammonium permease, the DUR1,2 urea amidolyase, and the transcription factor STP1, which in turn mediates SAP2 expression, a long-known virulence attribute of C.albicans. Influences the filamentation process depending upon the nitrogen sources available. Required for virulence in a mouse systemic infection model. The protein is Transcriptional regulatory protein GAT1 (GAT1) of Candida albicans (strain SC5314 / ATCC MYA-2876) (Yeast).